Consider the following 371-residue polypeptide: Glutamate 5-kinase (371 aa).

Residue K11 coordinates ATP. Substrate contacts are provided by S52, D139, and N151. Residues 171–172 (TD) and 213–219 (TGGMATK) contribute to the ATP site. In terms of domain architecture, PUA spans 278–356 (EGSLTLDEGA…AEIPYILGYE (79 aa)).

This sequence belongs to the glutamate 5-kinase family.

The protein localises to the cytoplasm. The enzyme catalyses L-glutamate + ATP = L-glutamyl 5-phosphate + ADP. Its pathway is amino-acid biosynthesis; L-proline biosynthesis; L-glutamate 5-semialdehyde from L-glutamate: step 1/2. Catalyzes the transfer of a phosphate group to glutamate to form L-glutamate 5-phosphate. The polypeptide is Glutamate 5-kinase (Synechococcus sp. (strain JA-3-3Ab) (Cyanobacteria bacterium Yellowstone A-Prime)).